The chain runs to 638 residues: Probable potassium transport system protein Kup (638 aa).

The next 12 helical transmembrane spans lie at 25 to 45 (LAIA…LYSL), 65 to 85 (VISL…LLFV), 114 to 134 (AGAL…DAVI), 152 to 172 (PHLS…LFWI), 184 to 204 (FGPI…YHIV), 226 to 246 (LLQA…AEAL), 262 to 282 (AYGL…ALLI), 291 to 311 (PFFL…STVA), 352 to 372 (IYVP…VIGF), 382 to 402 (YGIA…VVMV), 410 to 430 (LLVG…FGAN), and 434 to 454 (VAQG…LLMT).

It belongs to the HAK/KUP transporter (TC 2.A.72) family.

Its subcellular location is the cell inner membrane. The enzyme catalyses K(+)(in) + H(+)(in) = K(+)(out) + H(+)(out). Its function is as follows. Transport of potassium into the cell. Likely operates as a K(+):H(+) symporter. The polypeptide is Probable potassium transport system protein Kup (Burkholderia lata (strain ATCC 17760 / DSM 23089 / LMG 22485 / NCIMB 9086 / R18194 / 383)).